Here is a 372-residue protein sequence, read N- to C-terminus: tRNA 2-selenouridine synthase (372 aa).

In terms of domain architecture, Rhodanese spans 17–140 (FLQDIPLIDV…LRNFLLTTLE (124 aa)). Cys-100 serves as the catalytic S-selanylcysteine intermediate.

This sequence belongs to the SelU family. In terms of assembly, monomer.

It catalyses the reaction 5-methylaminomethyl-2-thiouridine(34) in tRNA + selenophosphate + (2E)-geranyl diphosphate + H2O + H(+) = 5-methylaminomethyl-2-selenouridine(34) in tRNA + (2E)-thiogeraniol + phosphate + diphosphate. The enzyme catalyses 5-methylaminomethyl-2-thiouridine(34) in tRNA + (2E)-geranyl diphosphate = 5-methylaminomethyl-S-(2E)-geranyl-thiouridine(34) in tRNA + diphosphate. The catalysed reaction is 5-methylaminomethyl-S-(2E)-geranyl-thiouridine(34) in tRNA + selenophosphate + H(+) = 5-methylaminomethyl-2-(Se-phospho)selenouridine(34) in tRNA + (2E)-thiogeraniol. It carries out the reaction 5-methylaminomethyl-2-(Se-phospho)selenouridine(34) in tRNA + H2O = 5-methylaminomethyl-2-selenouridine(34) in tRNA + phosphate. Involved in the post-transcriptional modification of the uridine at the wobble position (U34) of tRNA(Lys), tRNA(Glu) and tRNA(Gln). Catalyzes the conversion of 2-thiouridine (S2U-RNA) to 2-selenouridine (Se2U-RNA). Acts in a two-step process involving geranylation of 2-thiouridine (S2U) to S-geranyl-2-thiouridine (geS2U) and subsequent selenation of the latter derivative to 2-selenouridine (Se2U) in the tRNA chain. In Serratia proteamaculans (strain 568), this protein is tRNA 2-selenouridine synthase.